A 172-amino-acid chain; its full sequence is Pre-intermoult gene 1 protein (172 aa).

The first 22 residues, 1 to 22, serve as a signal peptide directing secretion; sequence MKLTKLWLLFVCLGLFVTLVVS. Over residues 25-45 the composition is skewed to acidic residues; it reads TDSDADSDSSADSDSSADSDE. The tract at residues 25–172 is disordered; sequence TDSDADSDSS…RRNNNSRRRG (148 aa). 3 consecutive repeat copies span residues 27–32, 33–38, and 39–44. A 3 X 6 AA tandem repeats of S-S-A-D-S-D region spans residues 27-44; that stretch reads SDADSDSSADSDSSADSD. The segment covering 55-77 has biased composition (low complexity); the sequence is TSTTESSATNSSGSSDDASGSSS. A compositionally biased stretch (acidic residues) spans 78-95; that stretch reads DVDDGSDDDTDSGSDTDY. Residues 104–172 are compositionally biased toward basic residues; sequence VKKRANRKKA…RRNNNSRRRG (69 aa).

In terms of tissue distribution, low expression in first to third instar larvae salivary glands.

In Drosophila melanogaster (Fruit fly), this protein is Pre-intermoult gene 1 protein (Pig1).